The sequence spans 131 residues: MFDGIGFMELLLIGVLGLVVLGPERLPVAVRSISGWIRAMKKMANSVKDELEQELKIEQLHTDLKKAENQGLKNLAPELQDSIDQLKQAAESVNRPYQVEDAPSAKETPAKETATTETTSTENAKSDKPNG.

A helical membrane pass occupies residues Phe2–Gly22. The disordered stretch occupies residues Asn69–Gly131. The span at Ala105–Asn123 shows a compositional bias: low complexity.

It belongs to the TatB family. In terms of assembly, the Tat system comprises two distinct complexes: a TatABC complex, containing multiple copies of TatA, TatB and TatC subunits, and a separate TatA complex, containing only TatA subunits. Substrates initially bind to the TatABC complex, which probably triggers association of the separate TatA complex to form the active translocon.

The protein resides in the cell inner membrane. Its function is as follows. Part of the twin-arginine translocation (Tat) system that transports large folded proteins containing a characteristic twin-arginine motif in their signal peptide across membranes. Together with TatC, TatB is part of a receptor directly interacting with Tat signal peptides. TatB may form an oligomeric binding site that transiently accommodates folded Tat precursor proteins before their translocation. This Shewanella piezotolerans (strain WP3 / JCM 13877) protein is Sec-independent protein translocase protein TatB.